Consider the following 56-residue polypeptide: Large ribosomal subunit protein bL33 (56 aa).

The protein belongs to the bacterial ribosomal protein bL33 family.

The chain is Large ribosomal subunit protein bL33 from Orientia tsutsugamushi (strain Ikeda) (Rickettsia tsutsugamushi).